Reading from the N-terminus, the 402-residue chain is Enoyl-[acyl-carrier-protein] reductase [NADH] (402 aa).

NAD(+) is bound by residues 48 to 53 (GASSGY), 74 to 75 (FE), 111 to 112 (DA), and 140 to 141 (LA). A substrate-binding site is contributed by tyrosine 226. The active-site Proton donor is tyrosine 236. Residues lysine 245 and 274–276 (VVT) contribute to the NAD(+) site.

It belongs to the TER reductase family. In terms of assembly, monomer.

It carries out the reaction a 2,3-saturated acyl-[ACP] + NAD(+) = a (2E)-enoyl-[ACP] + NADH + H(+). The protein operates within lipid metabolism; fatty acid biosynthesis. In terms of biological role, involved in the final reduction of the elongation cycle of fatty acid synthesis (FAS II). Catalyzes the reduction of a carbon-carbon double bond in an enoyl moiety that is covalently linked to an acyl carrier protein (ACP). The chain is Enoyl-[acyl-carrier-protein] reductase [NADH] from Xanthomonas axonopodis pv. citri (strain 306).